The chain runs to 482 residues: Cysteine--tRNA ligase (482 aa).

Cys29 lines the Zn(2+) pocket. The short motif at 31-41 (PTVYDFAHIGN) is the 'HIGH' region element. The Zn(2+) site is built by Cys224, His249, and Glu253. Residues 282 to 286 (KMSKS) carry the 'KMSKS' region motif. Lys285 provides a ligand contact to ATP.

This sequence belongs to the class-I aminoacyl-tRNA synthetase family. As to quaternary structure, monomer. It depends on Zn(2+) as a cofactor.

The protein resides in the cytoplasm. It catalyses the reaction tRNA(Cys) + L-cysteine + ATP = L-cysteinyl-tRNA(Cys) + AMP + diphosphate. The sequence is that of Cysteine--tRNA ligase from Nitrobacter hamburgensis (strain DSM 10229 / NCIMB 13809 / X14).